Consider the following 476-residue polypeptide: Growth arrest-specific protein 7 (476 aa).

The 62-residue stretch at 1–62 folds into the SH3 domain; it reads MSGARCRTLY…PASYVQLLEK (62 aa). Positions 77 to 110 constitute a WW domain; the sequence is VILPPGWQSYLSPQGRRYYVNTTTNETTWERPSS. Positions 100 to 171 are disordered; sequence TNETTWERPS…SSPSKKQSKE (72 aa). Residues 108-120 show a composition bias toward low complexity; sequence PSSSPGIPASPGS. 2 positions are modified to phosphoserine: S117 and S163. Residues 150–171 show a composition bias toward polar residues; it reads RKSTGDSQNLGSSSPSKKQSKE. Residues 196-456 form the F-BAR domain; the sequence is TEWSYCDYFW…LLRKVDPAKD (261 aa). A coiled-coil region spans residues 309–419; that stretch reads ENFKKDMKKC…RLEVERVEMI (111 aa).

It is found in the cytoplasm. Functionally, may play a role in promoting maturation and morphological differentiation of cerebellar neurons. This Homo sapiens (Human) protein is Growth arrest-specific protein 7 (GAS7).